A 322-amino-acid polypeptide reads, in one-letter code: Ferrochelatase (322 aa).

2 residues coordinate Fe cation: histidine 193 and glutamate 274.

It belongs to the ferrochelatase family.

Its subcellular location is the cytoplasm. It catalyses the reaction heme b + 2 H(+) = protoporphyrin IX + Fe(2+). It functions in the pathway porphyrin-containing compound metabolism; protoheme biosynthesis; protoheme from protoporphyrin-IX: step 1/1. Functionally, catalyzes the ferrous insertion into protoporphyrin IX. This is Ferrochelatase from Photobacterium profundum (strain SS9).